Consider the following 132-residue polypeptide: Large-conductance mechanosensitive channel (132 aa).

3 consecutive transmembrane segments (helical) span residues 14 to 34 (VVDLAVGVVIGAAFGKIVSSL), 38 to 58 (IITPLLGMVLGGVNFTDLHFG), and 67 to 87 (GNFIQTIFDFLIIAASIFMFI).

It belongs to the MscL family. In terms of assembly, homopentamer.

It localises to the cell membrane. In terms of biological role, channel that opens in response to stretch forces in the membrane lipid bilayer. May participate in the regulation of osmotic pressure changes within the cell. This chain is Large-conductance mechanosensitive channel, found in Bacillus cereus (strain G9842).